The following is a 244-amino-acid chain: NAD(P)H-quinone oxidoreductase subunit K (244 aa).

Residues Cys60, Cys61, Cys125, and Cys156 each coordinate [4Fe-4S] cluster. Residues 213–244 (TSANSIPSSKKEKITELPDNNEKAEIIDTLEN) form a disordered region. Positions 221-238 (SKKEKITELPDNNEKAEI) are enriched in basic and acidic residues.

The protein belongs to the complex I 20 kDa subunit family. NDH-1 can be composed of about 15 different subunits; different subcomplexes with different compositions have been identified which probably have different functions. [4Fe-4S] cluster serves as cofactor.

The protein localises to the cellular thylakoid membrane. The enzyme catalyses a plastoquinone + NADH + (n+1) H(+)(in) = a plastoquinol + NAD(+) + n H(+)(out). It carries out the reaction a plastoquinone + NADPH + (n+1) H(+)(in) = a plastoquinol + NADP(+) + n H(+)(out). Its function is as follows. NDH-1 shuttles electrons from an unknown electron donor, via FMN and iron-sulfur (Fe-S) centers, to quinones in the respiratory and/or the photosynthetic chain. The immediate electron acceptor for the enzyme in this species is believed to be plastoquinone. Couples the redox reaction to proton translocation, and thus conserves the redox energy in a proton gradient. Cyanobacterial NDH-1 also plays a role in inorganic carbon-concentration. This Prochlorococcus marinus (strain MIT 9301) protein is NAD(P)H-quinone oxidoreductase subunit K.